A 410-amino-acid chain; its full sequence is Class E basic helix-loop-helix protein 41 (410 aa).

Residue Lys31 forms a Glycyl lysine isopeptide (Lys-Gly) (interchain with G-Cter in SUMO2) linkage. One can recognise a bHLH domain in the interval 44–99 (TYKLPHRLIEKKRRDRINECIAQLKDLLPEHLKLTTLGHLEKAVVLELTLKHLKAL). Residue Lys121 forms a Glycyl lysine isopeptide (Lys-Gly) (interchain with G-Cter in SUMO2) linkage. The region spanning 131-166 (FHSGFQTCAKEVLQYLARFESWTPREPRCAQLVSHL) is the Orange domain. Disordered regions lie at residues 209-251 (IQRT…SAAP) and 371-410 (EVAP…KDAP). A Glycyl lysine isopeptide (Lys-Gly) (interchain with G-Cter in SUMO2) cross-link involves residue Lys240.

Homodimer. Heterodimer with BHLHE40/DEC1. Interacts with CIART. Interacts with BMAL1 and RXRA. Interacts with NR0B2 and HNF1A. Highly expressed in the caudate putamen, pineal gland, granular cell layer of the cerebellum, olfactory bulb, piriform cortex, hippocampus and hypothalamic nuclei. Moderately expressed in skeletal muscle, heart. Weakly expressed in lung.

The protein localises to the nucleus. In terms of biological role, transcriptional repressor involved in the regulation of the circadian rhythm by negatively regulating the activity of the clock genes and clock-controlled genes. Acts as the negative limb of a novel autoregulatory feedback loop (DEC loop) which differs from the one formed by the PER and CRY transcriptional repressors (PER/CRY loop). Both these loops are interlocked as it represses the expression of PER1 and in turn is repressed by PER1/2 and CRY1/2. Represses the activity of the circadian transcriptional activator: CLOCK-BMAL1 heterodimer by competing for the binding to E-box elements (5'-CACGTG-3') found within the promoters of its target genes. Negatively regulates its own expression and the expression of DBP and BHLHE41/DEC2. Acts as a corepressor of RXR and the RXR-LXR heterodimers and represses the ligand-induced RXRA/B/G, NR1H3/LXRA, NR1H4 and VDR transactivation activity. Inhibits HNF1A-mediated transactivation of CYP1A2, CYP2E1 and CYP3A11. This is Class E basic helix-loop-helix protein 41 (Bhlhb3) from Rattus norvegicus (Rat).